Consider the following 626-residue polypeptide: UvrABC system protein C (626 aa).

Residues 26–105 (PEPGVYFMRD…IKQHQPHFNV (80 aa)) enclose the GIY-YIG domain. The region spanning 215-250 (SELINTLSLQMEQAAEDLNFEQAARLRDQIKGLQGL) is the UVR domain.

This sequence belongs to the UvrC family. As to quaternary structure, interacts with UvrB in an incision complex.

It is found in the cytoplasm. The UvrABC repair system catalyzes the recognition and processing of DNA lesions. UvrC both incises the 5' and 3' sides of the lesion. The N-terminal half is responsible for the 3' incision and the C-terminal half is responsible for the 5' incision. The polypeptide is UvrABC system protein C (Acaryochloris marina (strain MBIC 11017)).